Here is a 370-residue protein sequence, read N- to C-terminus: uncharacterized protein (370 aa).

Asp-152, His-154, Asp-184, Asn-215, His-306, and His-308 together coordinate a divalent metal cation.

This sequence belongs to the metallophosphoesterase superfamily. Requires a divalent metal cation as cofactor.

This is an uncharacterized protein from Helicobacter pylori (strain ATCC 700392 / 26695) (Campylobacter pylori).